Reading from the N-terminus, the 63-residue chain is Small ribosomal subunit protein bS21 (63 aa).

Belongs to the bacterial ribosomal protein bS21 family.

This chain is Small ribosomal subunit protein bS21, found in Porphyromonas gingivalis (strain ATCC 33277 / DSM 20709 / CIP 103683 / JCM 12257 / NCTC 11834 / 2561).